The sequence spans 185 residues: Large ribosomal subunit protein bL25 (185 aa).

This sequence belongs to the bacterial ribosomal protein bL25 family. CTC subfamily. In terms of assembly, part of the 50S ribosomal subunit; part of the 5S rRNA/L5/L18/L25 subcomplex. Contacts the 5S rRNA. Binds to the 5S rRNA independently of L5 and L18.

This is one of the proteins that binds to the 5S RNA in the ribosome where it forms part of the central protuberance. In Microcystis aeruginosa (strain NIES-843 / IAM M-2473), this protein is Large ribosomal subunit protein bL25.